The sequence spans 422 residues: Dihydrofolate synthase/folylpolyglutamate synthase (422 aa).

29 to 31 is a binding site for 7,8-dihydropteroate; that stretch reads DLG. An ATP-binding site is contributed by 59 to 62; the sequence is GKGT. Residue S83 participates in Mg(2+) binding. Residue 122–125 coordinates 7,8-dihydropteroate; the sequence is TYFE. E146 serves as a coordination point for Mg(2+). 153 to 155 serves as a coordination point for 7,8-dihydropteroate; sequence LDA. Residue H173 participates in Mg(2+) binding. K188 carries the post-translational modification N6-carboxylysine. Positions 257, 289, and 302 each coordinate ATP.

This sequence belongs to the folylpolyglutamate synthase family. Monomer. Mg(2+) is required as a cofactor.

The catalysed reaction is 7,8-dihydropteroate + L-glutamate + ATP = 7,8-dihydrofolate + ADP + phosphate + H(+). It carries out the reaction (6S)-5,6,7,8-tetrahydrofolyl-(gamma-L-Glu)(n) + L-glutamate + ATP = (6S)-5,6,7,8-tetrahydrofolyl-(gamma-L-Glu)(n+1) + ADP + phosphate + H(+). The enzyme catalyses 10-formyltetrahydrofolyl-(gamma-L-Glu)(n) + L-glutamate + ATP = 10-formyltetrahydrofolyl-(gamma-L-Glu)(n+1) + ADP + phosphate + H(+). It catalyses the reaction (6R)-5,10-methylenetetrahydrofolyl-(gamma-L-Glu)(n) + L-glutamate + ATP = (6R)-5,10-methylenetetrahydrofolyl-(gamma-L-Glu)(n+1) + ADP + phosphate + H(+). Its pathway is cofactor biosynthesis; tetrahydrofolate biosynthesis; 7,8-dihydrofolate from 2-amino-4-hydroxy-6-hydroxymethyl-7,8-dihydropteridine diphosphate and 4-aminobenzoate: step 2/2. It functions in the pathway cofactor biosynthesis; tetrahydrofolylpolyglutamate biosynthesis. In terms of biological role, functions in two distinct reactions of the de novo folate biosynthetic pathway. Catalyzes the addition of a glutamate residue to dihydropteroate (7,8-dihydropteroate or H2Pte) to form dihydrofolate (7,8-dihydrofolate monoglutamate or H2Pte-Glu). Also catalyzes successive additions of L-glutamate to tetrahydrofolate or 10-formyltetrahydrofolate or 5,10-methylenetetrahydrofolate, leading to folylpolyglutamate derivatives. This Escherichia coli (strain K12) protein is Dihydrofolate synthase/folylpolyglutamate synthase.